We begin with the raw amino-acid sequence, 525 residues long: Heat shock factor protein 1 (525 aa).

M1 carries the N-acetylmethionine modification. The DNA-binding domain stretch occupies residues 15-120 (VPAFLTKLWT…LLENIKRKVT (106 aa)). Residue K80 is modified to N6-acetyllysine. K91 carries the post-translational modification N6-acetyllysine; alternate. K91 is covalently cross-linked (Glycyl lysine isopeptide (Lys-Gly) (interchain with G-Cter in SUMO2); alternate). K118 is subject to N6-acetyllysine. The residue at position 121 (S121) is a Phosphoserine; by MAPKAPK2. The hydrophobic repeat HR-A/B stretch occupies residues 130-203 (IKIRQDSVTK…ISLVQSNRIL (74 aa)). K131 is covalently cross-linked (Glycyl lysine isopeptide (Lys-Gly) (interchain with G-Cter in SUMO2)). T142 is modified (phosphothreonine; by CK2). Residues K150 and K188 each carry the N6-acetyllysine modification. The tract at residues 203–224 (LGVKRKIPLMLNDGGPAHPMPK) is d domain. K208 is subject to N6-acetyllysine; alternate. Residue K208 forms a Glycyl lysine isopeptide (Lys-Gly) (interchain with G-Cter in SUMO2); alternate linkage. Positions 221 to 310 (PMPKYGRQYS…PPSPPQSPRA (90 aa)) are regulatory domain. Residue K224 forms a Glycyl lysine isopeptide (Lys-Gly) (interchain with G-Cter in SUMO2) linkage. Phosphoserine; by CAMK2A is present on S230. Residues 266-365 (SDITELAPGS…RPPSPLPASA (100 aa)) form a disordered region. Low complexity predominate over residues 272 to 283 (APGSPVASSGGS). Residues S275 and S292 each carry the phosphoserine modification. K298 is modified (N6-acetyllysine; alternate). K298 is covalently cross-linked (Glycyl lysine isopeptide (Lys-Gly) (interchain with G-Cter in SUMO2); alternate). K298 is covalently cross-linked (Glycyl lysine isopeptide (Lys-Gly) (interchain with G-Cter in SUMO); alternate). S303 carries the post-translational modification Phosphoserine; by GSK3-beta. Phosphoserine; by MAPK3 is present on S307. S314 and S319 each carry phosphoserine. S320 is subject to Phosphoserine; by PKA. T324 bears the Phosphothreonine mark. S327 carries the post-translational modification Phosphoserine; by MAPK12. Position 346 is a phosphoserine (S346). S359 is modified (phosphoserine; by MAPK8). The segment at 367–525 (EKCLSVACLD…PPKAKDPTVS (159 aa)) is transactivation domain. Positions 380-405 (LSDHLDAMDSNLDNLQTMLTSHGFSV) are hydrophobic repeat HR-C. A 9aaTAD motif is present at residues 408–416 (STLLDLFSP). A Phosphoserine; by PLK1 modification is found at S415. At S440 the chain carries Phosphoserine. Positions 495–525 (YFSEGDDYSDDPTISLLTGSEPPKAKDPTVS) are disordered. K520 is modified (N6-acetyllysine).

The protein belongs to the HSF family. Monomer; cytoplasmic latent and transcriptionally inactive monomeric form in unstressed cells. Homotrimer; in response to stress, such as heat shock, homotrimerizes and translocates into the nucleus, binds to heat shock element (HSE) sequences in promoter of heat shock protein (HSP) genes and acquires transcriptional ability. Interacts (via monomeric form) with FKBP4; this interaction occurs in unstressed cells. Associates (via monomeric form) with HSP90 proteins in a multichaperone complex in unnstressed cell; this association maintains HSF1 in a non-DNA-binding and transcriptional inactive form by preventing HSF1 homotrimerization. Homotrimeric transactivation activity is modulated by protein-protein interactions and post-translational modifications. Interacts with HSP90AA1; this interaction is decreased in a IER5-dependent manner, promoting HSF1 accumulation in the nucleus, homotrimerization and DNA-binding activities. Part (via regulatory domain in the homotrimeric form) of a large heat shock-induced HSP90-dependent multichaperone complex at least composed of FKBP4, FKBP5, HSP90 proteins, PPID, PPP5C and PTGES3; this association maintains the HSF1 homotrimeric DNA-bound form in a transcriptionally inactive form. Interacts with BAG3 (via BAG domain); this interaction occurs in normal and heat-shocked cells promoting nuclear shuttling of HSF1 in a BAG3-dependent manner. Interacts (via homotrimeric and hyperphosphorylated form) with FKBP4; this interaction occurs upon heat shock in a HSP90-dependent multichaperone complex. Interacts (via homotrimeric form preferentially) with EEF1A proteins. In heat shocked cells, stress-denatured proteins compete with HSF1 homotrimeric DNA-bound form for association of the HSP90-dependent multichaperone complex, and hence alleviating repression of HSF1-mediated transcriptional activity. Interacts (via homotrimeric form preferentially) with DAXX; this interaction relieves homotrimeric HSF1 from repression of its transcriptional activity by HSP90-dependent multichaperone complex upon heat shock. Interacts (via D domain and preferentially with hyperphosphorylated form) with JNK1; this interaction occurs under both normal growth conditions and immediately upon heat shock. Interacts (via D domain and preferentially with hyperphosphorylated form) with MAPK3; this interaction occurs upon heat shock. Interacts with IER5 (via central region); this interaction promotes PPP2CA-induced dephosphorylation on Ser-121, Ser-307, Ser-314 and Thr-324 and HSF1 transactivation activity. Found in a ribonucleoprotein complex composed of the HSF1 homotrimeric form, translation elongation factor eEF1A proteins and non-coding RNA heat shock RNA-1 (HSR1); this complex occurs upon heat shock and stimulates HSF1 DNA-binding activity. Interacts (via transactivation domain) with HSPA1A/HSP70 and DNAJB1; these interactions result in the inhibition of heat shock- and HSF1-induced transcriptional activity during the attenuation and recovery phase from heat shock. Interacts (via Ser-303 and Ser-307 phosphorylated form) with YWHAE; this interaction promotes HSF1 sequestration in the cytoplasm in an ERK-dependent manner. Found in a complex with IER5 and PPP2CA. Interacts with TPR; this interaction increases upon heat shock and stimulates export of HSP70 mRNA. Interacts with SYMPK (via N-terminus) and CSTF2; these interactions occur upon heat shock. Interacts (via transactivation domain) with HSPA8. Interacts with EEF1D; this interaction occurs at heat shock promoter element (HSE) sequences. Interacts with MAPKAPK2. Interacts with PRKACA/PKA. Interacts (via transactivation domain) with GTF2A2. Interacts (via transactivation domain) with GTF2B. Interacts (via transactivation domain) with TBP. Interacts with CDK9, CCNT1 and EP300. Interacts (via N-terminus) with XRCC5 (via N-terminus) and XRCC6 (via N-terminus); these interactions are direct and prevent XRCC5/XRCC6 heterodimeric binding and non-homologous end joining (NHEJ) repair activities induced by ionizing radiation (IR). Interacts with PLK1; this interaction occurs during the early mitotic period, increases upon heat shock but does not modulate neither HSF1 homotrimerization and DNA-binding activities. Interacts with CDC20; this interaction occurs in mitosis in a MAD2L1-dependent manner and prevents PLK1-stimulated degradation of HSF1 by blocking the recruitment of the SCF(BTRC) ubiquitin ligase complex. Interacts with MAD2L1; this interaction occurs in mitosis. Interacts with BTRC; this interaction occurs during mitosis, induces its ubiquitin-dependent degradation following stimulus-dependent phosphorylation, a process inhibited by CDC20. Interacts with HSP90AA1 and HSP90AB1. Forms a complex with TTC5/STRAP and p300/EP300; these interactions augment chromatin-bound HSF1 and p300/EP300 histone acetyltransferase activity. In terms of processing, phosphorylated. Phosphorylated in unstressed cells; this phosphorylation is constitutive and implicated in the repression of HSF1 transcriptional activity. Phosphorylated on Ser-121 by MAPKAPK2; this phosphorylation promotes interaction with HSP90 proteins and inhibits HSF1 homotrimerization, DNA-binding and transactivation activities. Phosphorylation on Ser-303 by GSK3B/GSK3-beta and on Ser-307 by MAPK3 within the regulatory domain is involved in the repression of HSF1 transcriptional activity and occurs in a RAF1-dependent manner. Phosphorylation on Ser-303 and Ser-307 increases HSF1 nuclear export in a YWHAE- and XPO1/CRM1-dependent manner. Phosphorylation on Ser-307 is a prerequisite for phosphorylation on Ser-303. According to, Ser-303 is not phosphorylated in unstressed cells. Phosphorylated on Ser-415 by PLK1; phosphorylation promotes nuclear translocation upon heat shock. Hyperphosphorylated upon heat shock and during the attenuation and recovery phase period of the heat shock response. Phosphorylated on Thr-142; this phosphorylation increases HSF1 transactivation activity upon heat shock. Phosphorylation on Ser-230 by CAMK2A; this phosphorylation enhances HSF1 transactivation activity upon heat shock. Phosphorylation on Ser-327 by MAPK12; this phosphorylation enhances HSF1 nuclear translocation, homotrimerization and transactivation activities upon heat shock. Phosphorylated on Ser-320 by PRKACA/PKA; this phosphorylation promotes nuclear localization and transcriptional activity upon heat shock. Phosphorylated on Ser-359 by MAPK8; this phosphorylation occurs upon heat shock, induces HSF1 translocation into nuclear stress bodies and negatively regulates transactivation activity. Neither basal nor stress-inducible phosphorylation on Ser-230, Ser-292, Ser-303, Ser-307, Ser-314, Ser-319, Ser-320, Thr-324, Ser-327, Ser-339, Ser-346, Ser-359 and Ser-364 within the regulatory domain is involved in the regulation of HSF1 subcellular localization or DNA-binding activity; however, it negatively regulates HSF1 transactivation activity. Phosphorylated by PLK1 in the early mitotic period; this phosphorylation regulates HSF1 localization to the spindle pole, the recruitment of the SCF(BTRC) ubiquitin ligase complex inducing HSF1 degradation, and hence mitotic progression. Dephosphorylated on Ser-121, Ser-307, Ser-314, Thr-324 by phosphatase PPP2CA in an IER5-dependent manner, leading to HSF1-mediated transactivation activity. Sumoylated with SUMO1 and SUMO2 upon heat shock in a ERK2-dependent manner. Sumoylated by SUMO1 on Lys-298; sumoylation occurs upon heat shock and promotes its localization to nuclear stress bodies and DNA-binding activity. Phosphorylation on Ser-303 and Ser-307 is probably a prerequisite for sumoylation. Post-translationally, acetylated on Lys-118; this acetylation is decreased in a IER5-dependent manner. Acetylated on Lys-118, Lys-208 and Lys-298; these acetylations occur in a EP300-dependent manner. Acetylated on Lys-80; this acetylation inhibits DNA-binding activity upon heat shock. Deacetylated on Lys-80 by SIRT1; this deacetylation increases DNA-binding activity. In terms of processing, ubiquitinated by SCF(BTRC) and degraded following stimulus-dependent phosphorylation by PLK1 in mitosis. Polyubiquitinated. Undergoes proteasomal degradation upon heat shock and during the attenuation and recovery phase period of the heat shock response.

The protein localises to the nucleus. The protein resides in the cytoplasm. Its subcellular location is the nucleoplasm. It is found in the perinuclear region. It localises to the cytoskeleton. The protein localises to the spindle pole. The protein resides in the microtubule organizing center. Its subcellular location is the centrosome. It is found in the chromosome. It localises to the centromere. The protein localises to the kinetochore. Functions as a stress-inducible and DNA-binding transcription factor that plays a central role in the transcriptional activation of the heat shock response (HSR), leading to the expression of a large class of molecular chaperones, heat shock proteins (HSPs), that protect cells from cellular insult damage. In unstressed cells, is present in a HSP90-containing multichaperone complex that maintains it in a non-DNA-binding inactivated monomeric form. Upon exposure to heat and other stress stimuli, undergoes homotrimerization and activates HSP gene transcription through binding to site-specific heat shock elements (HSEs) present in the promoter regions of HSP genes. Upon heat shock stress, forms a chromatin-associated complex with TTC5/STRAP and p300/EP300 to stimulate HSR transcription, therefore increasing cell survival. Activation is reversible, and during the attenuation and recovery phase period of the HSR, returns to its unactivated form. Binds to inverted 5'-NGAAN-3' pentamer DNA sequences. Binds to chromatin at heat shock gene promoters. Activates transcription of transcription factor FOXR1 which in turn activates transcription of the heat shock chaperones HSPA1A and HSPA6 and the antioxidant NADPH-dependent reductase DHRS2. Also serves several other functions independently of its transcriptional activity. Involved in the repression of Ras-induced transcriptional activation of the c-fos gene in heat-stressed cells. Positively regulates pre-mRNA 3'-end processing and polyadenylation of HSP70 mRNA upon heat-stressed cells in a symplekin (SYMPK)-dependent manner. Plays a role in nuclear export of stress-induced HSP70 mRNA. Plays a role in the regulation of mitotic progression. Also plays a role as a negative regulator of non-homologous end joining (NHEJ) repair activity in a DNA damage-dependent manner. Involved in stress-induced cancer cell proliferation in a IER5-dependent manner. The chain is Heat shock factor protein 1 from Bos taurus (Bovine).